Here is a 202-residue protein sequence, read N- to C-terminus: Ribosomal RNA small subunit methyltransferase G (202 aa).

Residues G75, F80, V125–Q126, and R139 contribute to the S-adenosyl-L-methionine site.

Belongs to the methyltransferase superfamily. RNA methyltransferase RsmG family.

It localises to the cytoplasm. Its function is as follows. Specifically methylates the N7 position of a guanine in 16S rRNA. The sequence is that of Ribosomal RNA small subunit methyltransferase G from Mesomycoplasma hyopneumoniae (strain J / ATCC 25934 / NCTC 10110) (Mycoplasma hyopneumoniae).